Consider the following 1062-residue polypeptide: Protein P1-P2 (1062 aa).

A signal peptide spans 1–20; the sequence is MNRFTAYAALFFIFSLCSTA. Transmembrane regions (helical) follow at residues 121-141, 144-164, and 172-192; these read AASV…WTLA, ITLF…LGCI, and ALSL…KIIW. The 193-residue stretch at 207-399 folds into the Peptidase S39 domain; that stretch reads VEGYKGFSVP…GITSPNYVFE (193 aa). Residues histidine 255, aspartate 286, and serine 354 each act as for protease activity in the active site. A disordered region spans residues 456 to 557; it reads TNAPAEKTAQ…AEAQTKQTRK (102 aa). Over residues 463 to 484 the composition is skewed to polar residues; sequence TAQTNSAEKTAPSTSAEKTAPT. The span at 497-511 shows a compositional bias: basic residues; sequence QNKRQLRHPRRRYKR. Residues 541–553 show a composition bias toward polar residues; sequence QGVSESPAEAQTK. Residues 859 to 974 enclose the RdRp catalytic domain; that stretch reads EHTRPTDCSG…APNSDLEEYK (116 aa).

In terms of processing, specific enzymatic cleavages in vivo yield mature proteins. The protease probably cleaves itself and releases the RdRp (Potential). Cleavages have been shown in the P1 protein, but since the N-terminus containing the serine protease is shared between P1 and P1-P2, cleavages should also occur within the P1-P2 protein.

It localises to the membrane. It carries out the reaction RNA(n) + a ribonucleoside 5'-triphosphate = RNA(n+1) + diphosphate. Its function is as follows. Precursor from which the RNA-dependent RNA polymerase (RdRp) is probably released. RNA-dependent RNA polymerase plays an essential role in virus replication (Potential). The chain is Protein P1-P2 from Solanum tuberosum (Potato).